Here is a 469-residue protein sequence, read N- to C-terminus: Glutamate--tRNA ligase (469 aa).

Positions 11 to 21 (PSPTGFIHLGN) match the 'HIGH' region motif. Positions 243-247 (KMSKR) match the 'KMSKS' region motif. Lys-246 is an ATP binding site.

This sequence belongs to the class-I aminoacyl-tRNA synthetase family. Glutamate--tRNA ligase type 1 subfamily. In terms of assembly, monomer.

The protein resides in the cytoplasm. The enzyme catalyses tRNA(Glu) + L-glutamate + ATP = L-glutamyl-tRNA(Glu) + AMP + diphosphate. Catalyzes the attachment of glutamate to tRNA(Glu) in a two-step reaction: glutamate is first activated by ATP to form Glu-AMP and then transferred to the acceptor end of tRNA(Glu). In Burkholderia cenocepacia (strain ATCC BAA-245 / DSM 16553 / LMG 16656 / NCTC 13227 / J2315 / CF5610) (Burkholderia cepacia (strain J2315)), this protein is Glutamate--tRNA ligase.